An 835-amino-acid polypeptide reads, in one-letter code: Translation initiation factor IF-2 (835 aa).

The tract at residues 1–240 (MSDSDGKKTL…RKQERARQKA (240 aa)) is disordered. Residues 50 to 59 (AGKGGAGGVA) are compositionally biased toward gly residues. The span at 86-152 (KAREAEEAAQ…AEAAKKRAAA (67 aa)) shows a compositional bias: basic and acidic residues. The span at 153–169 (DKAAAAAPKSDAGVAPA) shows a compositional bias: low complexity. The segment covering 184-205 (RKAEREREERGRGAKGRNDGGR) has biased composition (basic and acidic residues). Residues 332-500 (PRPPVITIMG…AIALQAEILE (169 aa)) enclose the tr-type G domain. The interval 341–348 (GHVDHGKT) is G1. Residue 341–348 (GHVDHGKT) coordinates GTP. Residues 366-370 (GITQH) are G2. Residues 388-391 (DTPG) form a G3 region. GTP-binding positions include 388 to 392 (DTPGH) and 442 to 445 (NKID). The segment at 442-445 (NKID) is G4. The segment at 478 to 480 (SAH) is G5.

It belongs to the TRAFAC class translation factor GTPase superfamily. Classic translation factor GTPase family. IF-2 subfamily.

The protein resides in the cytoplasm. In terms of biological role, one of the essential components for the initiation of protein synthesis. Protects formylmethionyl-tRNA from spontaneous hydrolysis and promotes its binding to the 30S ribosomal subunits. Also involved in the hydrolysis of GTP during the formation of the 70S ribosomal complex. This Ruegeria sp. (strain TM1040) (Silicibacter sp.) protein is Translation initiation factor IF-2.